The chain runs to 511 residues: Glucose-6-phosphate 1-dehydrogenase (511 aa).

Residues 29–36, Arg-63, and Lys-164 contribute to the NADP(+) site; that span reads GASGDLAK. D-glucose 6-phosphate is bound by residues Lys-164, 194-198, Glu-232, and Asp-251; that span reads HYLGK. His-256 (proton acceptor) is an active-site residue. Lys-347 contributes to the NADP(+) binding site. Residue Lys-350 participates in D-glucose 6-phosphate binding. NADP(+) contacts are provided by Lys-356, Arg-360, and Arg-382. Gln-384 lines the D-glucose 6-phosphate pocket. NADP(+)-binding positions include 390-392, 410-412, and Arg-477; these read YIK and DLT.

It belongs to the glucose-6-phosphate dehydrogenase family.

The catalysed reaction is D-glucose 6-phosphate + NADP(+) = 6-phospho-D-glucono-1,5-lactone + NADPH + H(+). The protein operates within carbohydrate degradation; pentose phosphate pathway; D-ribulose 5-phosphate from D-glucose 6-phosphate (oxidative stage): step 1/3. Functionally, catalyzes the rate-limiting step of the oxidative pentose-phosphate pathway, which represents a route for the dissimilation of carbohydrates besides glycolysis. The main function of this enzyme is to provide reducing power (NADPH) and pentose phosphates for fatty acid and nucleic acid synthesis. This is Glucose-6-phosphate 1-dehydrogenase (gsdA) from Emericella nidulans (strain FGSC A4 / ATCC 38163 / CBS 112.46 / NRRL 194 / M139) (Aspergillus nidulans).